A 282-amino-acid chain; its full sequence is Pantothenate synthetase (282 aa).

Residue 30–37 participates in ATP binding; the sequence is MGALHAGH. The Proton donor role is filled by H37. (R)-pantoate is bound at residue Q61. Beta-alanine is bound at residue Q61. An ATP-binding site is contributed by 147 to 150; sequence GEKD. A (R)-pantoate-binding site is contributed by Q153. ATP-binding positions include V177 and 185-188; that span reads LSSR.

It belongs to the pantothenate synthetase family. In terms of assembly, homodimer.

It localises to the cytoplasm. It catalyses the reaction (R)-pantoate + beta-alanine + ATP = (R)-pantothenate + AMP + diphosphate + H(+). It functions in the pathway cofactor biosynthesis; (R)-pantothenate biosynthesis; (R)-pantothenate from (R)-pantoate and beta-alanine: step 1/1. Catalyzes the condensation of pantoate with beta-alanine in an ATP-dependent reaction via a pantoyl-adenylate intermediate. The protein is Pantothenate synthetase of Phocaeicola vulgatus (strain ATCC 8482 / DSM 1447 / JCM 5826 / CCUG 4940 / NBRC 14291 / NCTC 11154) (Bacteroides vulgatus).